A 137-amino-acid polypeptide reads, in one-letter code: 5-hydroxyisourate hydrolase (137 aa).

Positions 1–23 (MLKRYLVLSVVTAAFSLPSLVYA) are cleaved as a signal peptide. 3 residues coordinate substrate: H32, R70, and Y134.

It belongs to the transthyretin family. 5-hydroxyisourate hydrolase subfamily. In terms of assembly, homotetramer.

It localises to the periplasm. The catalysed reaction is 5-hydroxyisourate + H2O = 5-hydroxy-2-oxo-4-ureido-2,5-dihydro-1H-imidazole-5-carboxylate + H(+). Functionally, catalyzes the hydrolysis of 5-hydroxyisourate (HIU) to 2-oxo-4-hydroxy-4-carboxy-5-ureidoimidazoline (OHCU). The sequence is that of 5-hydroxyisourate hydrolase (hiuH) from Escherichia coli O157:H7.